The following is a 629-amino-acid chain: 1-deoxy-D-xylulose-5-phosphate synthase (629 aa).

Residues His72 and Gly113 to Ala115 each bind thiamine diphosphate. Asp144 is a Mg(2+) binding site. Thiamine diphosphate is bound by residues Gly145–Ala146, Asn174, Tyr287, and Glu370. Asn174 contributes to the Mg(2+) binding site.

This sequence belongs to the transketolase family. DXPS subfamily. In terms of assembly, homodimer. The cofactor is Mg(2+). Thiamine diphosphate is required as a cofactor.

The catalysed reaction is D-glyceraldehyde 3-phosphate + pyruvate + H(+) = 1-deoxy-D-xylulose 5-phosphate + CO2. It participates in metabolic intermediate biosynthesis; 1-deoxy-D-xylulose 5-phosphate biosynthesis; 1-deoxy-D-xylulose 5-phosphate from D-glyceraldehyde 3-phosphate and pyruvate: step 1/1. In terms of biological role, catalyzes the acyloin condensation reaction between C atoms 2 and 3 of pyruvate and glyceraldehyde 3-phosphate to yield 1-deoxy-D-xylulose-5-phosphate (DXP). In Prochlorococcus marinus (strain AS9601), this protein is 1-deoxy-D-xylulose-5-phosphate synthase.